Reading from the N-terminus, the 317-residue chain is Type II restriction enzyme NaeI (317 aa).

As to quaternary structure, homodimer.

The enzyme catalyses Endonucleolytic cleavage of DNA to give specific double-stranded fragments with terminal 5'-phosphates.. An E and P subtype restriction enzyme that recognizes the double-stranded unmethylated sequence 5'-GCCGGC-3' and cleaves after C-3. In Lentzea aerocolonigenes (Lechevalieria aerocolonigenes), this protein is Type II restriction enzyme NaeI.